The sequence spans 78 residues: MNPIVEFCISNMAKGGDYVYNKLDQDPGVDVLEYGCLQNCGVCSSGLYALVNGDIVEGDSPDDLLQNIYKHIEETWIF.

The protein belongs to the UPF0349 family.

In Staphylococcus carnosus (strain TM300), this protein is UPF0349 protein Sca_0544.